We begin with the raw amino-acid sequence, 194 residues long: Peptidyl-tRNA hydrolase (194 aa).

TRNA is bound at residue tyrosine 17. Catalysis depends on histidine 22, which acts as the Proton acceptor. TRNA contacts are provided by phenylalanine 68, asparagine 70, and asparagine 116.

The protein belongs to the PTH family. In terms of assembly, monomer.

It is found in the cytoplasm. It carries out the reaction an N-acyl-L-alpha-aminoacyl-tRNA + H2O = an N-acyl-L-amino acid + a tRNA + H(+). In terms of biological role, hydrolyzes ribosome-free peptidyl-tRNAs (with 1 or more amino acids incorporated), which drop off the ribosome during protein synthesis, or as a result of ribosome stalling. Catalyzes the release of premature peptidyl moieties from peptidyl-tRNA molecules trapped in stalled 50S ribosomal subunits, and thus maintains levels of free tRNAs and 50S ribosomes. The polypeptide is Peptidyl-tRNA hydrolase (Haemophilus influenzae (strain PittGG)).